The chain runs to 191 residues: Protein GrpE (191 aa).

2 stretches are compositionally biased toward basic and acidic residues: residues 1–19 and 29–45; these read MKDEHNQEHDHLSPKEPES and QQGEEKQEASEKEGEIK. The segment at 1–45 is disordered; the sequence is MKDEHNQEHDHLSPKEPESYQKAYACKEQQGEEKQEASEKEGEIK.

The protein belongs to the GrpE family. In terms of assembly, homodimer.

Its subcellular location is the cytoplasm. Functionally, participates actively in the response to hyperosmotic and heat shock by preventing the aggregation of stress-denatured proteins, in association with DnaK and GrpE. It is the nucleotide exchange factor for DnaK and may function as a thermosensor. Unfolded proteins bind initially to DnaJ; upon interaction with the DnaJ-bound protein, DnaK hydrolyzes its bound ATP, resulting in the formation of a stable complex. GrpE releases ADP from DnaK; ATP binding to DnaK triggers the release of the substrate protein, thus completing the reaction cycle. Several rounds of ATP-dependent interactions between DnaJ, DnaK and GrpE are required for fully efficient folding. This Helicobacter pylori (strain J99 / ATCC 700824) (Campylobacter pylori J99) protein is Protein GrpE.